The chain runs to 185 residues: 4-nitrophenol 4-monooxygenase/4-nitrocatechol 2-monooxygenase, reductase component (185 aa).

Belongs to the non-flavoprotein flavin reductase family. As to quaternary structure, the 4-NP/4-NCA monooxygenase is composed of an oxygenase component NpcA and a reductase component NpcB.

It catalyses the reaction 4-nitrophenol + NADH + O2 + H(+) = 4-nitrocatechol + NAD(+) + H2O. It carries out the reaction 4-nitrocatechol + NADPH + O2 = 2-hydroxy-1,4-benzoquinone + nitrite + NADP(+) + H2O. The enzyme catalyses 4-nitrocatechol + NADH + O2 = 2-hydroxy-1,4-benzoquinone + nitrite + NAD(+) + H2O. It functions in the pathway aromatic compound metabolism. The protein operates within xenobiotic degradation. With respect to regulation, inhibited by methimazole. Its function is as follows. Involved in the degradation of para-nitrophenol (4-NP). Catalyzes both the initial hydroxylation of 4-NP to produce 4-nitrocatechol (4-NCA) and the subsequent oxidative release of the nitro group from 4-NCA to produce 2-hydroxy-1,4-benzoquinone. It can also use 4-nitroresorcinol as substrate with a rate of nitrite release similar to that observed with the two physiological substrates, 4-PN and 4-NCA. The sequence is that of 4-nitrophenol 4-monooxygenase/4-nitrocatechol 2-monooxygenase, reductase component (npcB) from Rhodococcus opacus (Nocardia opaca).